The following is a 410-amino-acid chain: Serine proteinase inhibitor A3K (410 aa).

An N-terminal signal peptide occupies residues 1–24; that stretch reads MPSAISRGLLLLAGLCYLVFGIMA. 5 N-linked (GlcNAc...) asparagine glycosylation sites follow: Asn-62, Asn-99, Asn-162, Asn-229, and Asn-263. Residues 360–381 form an RCL region; it reads GTEAAAATVLEATRTARPPRLS.

The protein belongs to the serpin family.

It localises to the secreted. It is found in the extracellular space. Contrapsin inhibits trypsin-like proteases. This Cavia porcellus (Guinea pig) protein is Serine proteinase inhibitor A3K (SERPINA3K).